A 78-amino-acid chain; its full sequence is Large ribosomal subunit protein bL28 (78 aa).

Residues 1 to 30 (MAAHCQVTGAQPGFGHSISHSHRRTKRRWN) form a disordered region. A compositionally biased stretch (basic residues) spans 19–30 (SHSHRRTKRRWN).

This sequence belongs to the bacterial ribosomal protein bL28 family.

The polypeptide is Large ribosomal subunit protein bL28 (Kocuria rhizophila (strain ATCC 9341 / DSM 348 / NBRC 103217 / DC2201)).